Reading from the N-terminus, the 311-residue chain is Probable manganese-dependent inorganic pyrophosphatase (311 aa).

Positions 9, 13, 15, 75, 97, and 149 each coordinate Mn(2+).

Belongs to the PPase class C family. Mn(2+) serves as cofactor.

The protein resides in the cytoplasm. The catalysed reaction is diphosphate + H2O = 2 phosphate + H(+). The sequence is that of Probable manganese-dependent inorganic pyrophosphatase from Lactobacillus helveticus (strain DPC 4571).